Consider the following 102-residue polypeptide: Small ribosomal subunit protein uS10 (102 aa).

The protein belongs to the universal ribosomal protein uS10 family. As to quaternary structure, part of the 30S ribosomal subunit.

Its function is as follows. Involved in the binding of tRNA to the ribosomes. The sequence is that of Small ribosomal subunit protein uS10 from Staphylococcus haemolyticus (strain JCSC1435).